Reading from the N-terminus, the 157-residue chain is uncharacterized protein (157 aa).

Residue Lys115 forms an Isoglutamyl lysine isopeptide (Lys-Gln) (interchain with Q-Cter in protein Pup) linkage.

This is an uncharacterized protein from Mycolicibacterium smegmatis (strain ATCC 700084 / mc(2)155) (Mycobacterium smegmatis).